A 269-amino-acid polypeptide reads, in one-letter code: MMTIYGVVGYPVEHSLSPVMHNAAFKALDMDCAYHKFEVKGEHLKDAILGARYLGFGGLNVTIPHKEAALRIMEPDRTALEIGAANTLDFKQMRAFNTDAAGAIDALRDGGVELENKGVLVLGAGGAARAVVYGLVKEGATVTIANRTTAKAADLAAYMRSFGSVFGTSLDSLGEKVRAVDIVINTTPIGMGWEDKPLVTRDMLDRSQAVFDLVYRPVETPLLREARAAGAKTIDGISMLARQGAKSFEIWTGVKPPVDVMERSARDAL.

Residues 15 to 17 and T62 contribute to the shikimate site; that span reads SLS. The active-site Proton acceptor is the K66. Residues N86 and D99 each contribute to the shikimate site. NADP(+) is bound by residues 123–127, 146–151, and L213; these read GAGGA and NRTTAK. A shikimate-binding site is contributed by Y215. G236 provides a ligand contact to NADP(+).

This sequence belongs to the shikimate dehydrogenase family. In terms of assembly, homodimer.

It catalyses the reaction shikimate + NADP(+) = 3-dehydroshikimate + NADPH + H(+). It participates in metabolic intermediate biosynthesis; chorismate biosynthesis; chorismate from D-erythrose 4-phosphate and phosphoenolpyruvate: step 4/7. Functionally, involved in the biosynthesis of the chorismate, which leads to the biosynthesis of aromatic amino acids. Catalyzes the reversible NADPH linked reduction of 3-dehydroshikimate (DHSA) to yield shikimate (SA). The sequence is that of Shikimate dehydrogenase (NADP(+)) from Methanocella arvoryzae (strain DSM 22066 / NBRC 105507 / MRE50).